Consider the following 138-residue polypeptide: Cysteine desulfuration protein SufE (138 aa).

The active-site Cysteine persulfide intermediate is Cys51.

Belongs to the SufE family. Homodimer. Interacts with SufS.

It localises to the cytoplasm. The protein operates within cofactor biosynthesis; iron-sulfur cluster biosynthesis. Participates in cysteine desulfuration mediated by SufS. Cysteine desulfuration mobilizes sulfur from L-cysteine to yield L-alanine and constitutes an essential step in sulfur metabolism for biosynthesis of a variety of sulfur-containing biomolecules. Functions as a sulfur acceptor for SufS, by mediating the direct transfer of the sulfur atom from the S-sulfanylcysteine of SufS, an intermediate product of cysteine desulfuration process. The chain is Cysteine desulfuration protein SufE from Escherichia coli O8 (strain IAI1).